The chain runs to 387 residues: Exodeoxyribonuclease 7 large subunit (387 aa).

This sequence belongs to the XseA family. Heterooligomer composed of large and small subunits.

Its subcellular location is the cytoplasm. The enzyme catalyses Exonucleolytic cleavage in either 5'- to 3'- or 3'- to 5'-direction to yield nucleoside 5'-phosphates.. Bidirectionally degrades single-stranded DNA into large acid-insoluble oligonucleotides, which are then degraded further into small acid-soluble oligonucleotides. This Synechococcus sp. (strain CC9902) protein is Exodeoxyribonuclease 7 large subunit.